The following is a 418-amino-acid chain: Zinc metalloproteinase nas-8 (418 aa).

Positions Met1–Ala28 are cleaved as a signal peptide. The propeptide occupies Gln29–Arg100. The Peptidase M12A domain occupies Asn101–Pro296. Disulfide bonds link Cys143–Cys295, Cys165–Cys184, Cys347–Cys381, Cys354–Cys374, and Cys361–Cys378. His192 lines the Zn(2+) pocket. The active site involves Glu193. 2 residues coordinate Zn(2+): His196 and His202. Residues Cys347–Cys381 enclose the ShKT domain.

Zn(2+) is required as a cofactor.

It is found in the secreted. The catalysed reaction is Hydrolysis of peptide bonds in substrates containing five or more amino acids, preferentially with Ala in P1', and Pro in P2'.. Inhibited by ethylene glycol-bis(2-aminoethylether)-N,N,N,N-tetraacetic acid (EGTA), ethylenediaminetetraacetic acid (EDTA) and o-phenanthroline. Functionally, metalloprotease. The chain is Zinc metalloproteinase nas-8 from Steinernema carpocapsae (Entomopathogenic nematode).